The chain runs to 237 residues: Tetraspanin-8 (237 aa).

Topologically, residues 1–9 (MAGVSACIK) are cytoplasmic. A helical transmembrane segment spans residues 10 to 33 (YSMFTFNFLFWLCGILILALAIWV). Topologically, residues 34–57 (RVSNDSQAIFGSEDVGSSSYVAVD) are extracellular. Residues 58–72 (ILIAVGAIIMILGFL) form a helical membrane-spanning segment. Topologically, residues 73–83 (GCCGAIKESRC) are cytoplasmic. Residues 84–109 (MLLLFFIGLLLILLLQVATGILGAVF) traverse the membrane as a helical segment. The Extracellular segment spans residues 110–205 (KSKSDRIVNE…SFIKDFLAKN (96 aa)). An N-linked (GlcNAc...) asparagine glycan is attached at Asn-118. The chain crosses the membrane as a helical span at residues 206 to 230 (LIIVIGISFGLAVIEILGLVFSMVL). At 231-237 (YCQIGNK) the chain is on the cytoplasmic side.

The protein belongs to the tetraspanin (TM4SF) family. As to quaternary structure, forms homooligomers. Interacts with MEP1B. Interacts with integrin alpha3/ITGA3. Interacts with RICTOR and MTOR. Interacts with ADAM17. Interacts with ECE1. In terms of tissue distribution, gastric, colon, rectal, and pancreatic carcinomas.

It localises to the cell membrane. In terms of biological role, structural component of specialized membrane microdomains known as tetraspanin-enriched microdomains (TERMs), which act as platforms for receptor clustering and signaling. Participates thereby in diverse biological functions such as cell signal transduction, migration and protein trafficking. Promotes ADAM17-mediated TNF-alpha processing through recruitment of ADAM17 to tetraspanin-enriched micro-domains (TEMs). Forms a complex with RICTOR and integrin alpha3/ITGA3 to mediate mTORC2 activation and AKT1 phosphorylation leading to cell migration. Reduces apoptosis and autophagy induced by high glucose levels through forming a complex with mTOR and RICTOR. Contributes to the maintenance of intestinal epithelial barrier and plays a role in the regulation of intestine inflammation by switching interferon gamma receptor 1/IFNGR1 from clathrin-dependent to lipid raft-dependent endocytosis route to limit STAT1 activation magnitude and duration. Acts as a modulator of the endothelin axis by associating with endothelin converting enzyme ECE1 and regulating its activity of conversion of the endothelin-1 precursor to endothelin. This chain is Tetraspanin-8 (TSPAN8), found in Homo sapiens (Human).